A 123-amino-acid chain; its full sequence is Potassium voltage-gated channel subfamily E member 2 (123 aa).

Asn6 and Asn29 each carry an N-linked (GlcNAc...) asparagine glycan. Residues 49–69 traverse the membrane as a helical segment; that stretch reads VILYLMVMIGMFSFIVVAILV. Over 70–123 the chain is Cytoplasmic; sequence STVKSKRREHSQHPYHQYIVEDWQEKYKSQILHLEDSKATIHENMGATGFTVSP.

The protein belongs to the potassium channel KCNE family. In terms of assembly, interacts with KCNB1. Associates with KCNH2/ERG1. May associate with KCNQ2 and KCNQ3. Associates with HCN1 and probably HCN2. Heteromultimer with KCNC2. Interacts with KCNC2. Interacts with KCNQ1. Forms a heterooligomer complex with KCNQ1 that targets to the membrane raft and leading to currents with an apparently instantaneous activation, a rapid deactivation process and a linear current-voltage relationship and decreases the amplitude of the outward current.

The protein localises to the cell membrane. It is found in the apical cell membrane. Its function is as follows. Ancillary protein that functions as a regulatory subunit of the voltage-gated potassium (Kv) channel complex composed of pore-forming and potassium-conducting alpha subunits and of regulatory beta subunits. KCNE2 beta subunit modulates the gating kinetics and enhances stability of the channel complex. Alters the gating of the delayed rectifier Kv channel containing KCNB1 alpha subunit. Associates with KCNH2/HERG alpha subunit Kv channel to form the rapidly activating component of the delayed rectifying potassium current (IKr) in heart. May associate with KCNQ2 and/or KCNQ3 alpha subunits to modulate the native M-type current. May associate with HCN1 and HCN2 channel subunits to increase potassium current. Forms a heterooligomer complex with KCNQ1/KVLQT1 alpha subunits which leads to currents with an apparently instantaneous activation, a rapid deactivation process and a linear current-voltage relationship and decreases the amplitude of the outward current. KCNQ1-KCNE2 channel associates with Na(+)-coupled myo-inositol symporter in the apical membrane of choroid plexus epithelium and regulates the myo-inositol gradient between blood and cerebrospinal fluid with an impact on neuron excitability. This is Potassium voltage-gated channel subfamily E member 2 from Mus musculus (Mouse).